A 576-amino-acid chain; its full sequence is Threonine dehydratase, mitochondrial (576 aa).

At Lys-109 the chain carries N6-(pyridoxal phosphate)lysine. ACT-like domains follow at residues 393–473 (VFML…DISD) and 495–566 (RIIS…DETD).

Belongs to the serine/threonine dehydratase family. As to quaternary structure, homotetramer. Requires pyridoxal 5'-phosphate as cofactor.

The protein resides in the mitochondrion. The catalysed reaction is L-threonine = 2-oxobutanoate + NH4(+). The protein operates within amino-acid biosynthesis; L-isoleucine biosynthesis; 2-oxobutanoate from L-threonine: step 1/1. Isoleucine allosterically inhibits while valine allosterically activates this enzyme. The sequence is that of Threonine dehydratase, mitochondrial (ILV1) from Saccharomyces cerevisiae (strain ATCC 204508 / S288c) (Baker's yeast).